The primary structure comprises 205 residues: MSKRESAKYKIDRRLGENIWGRPKSPVNKREYGPGQHGQRRKGKLSDFGLQLRAKQKLKGHYGDVSEKQFRKVYEEADRRKGDTSENLIGLLESRLDAVVYRAKFVPTIFAARQFVNHGHVNVNGKRVNIGSYRCKPGDVIEVREKSKQLVIVLESVGLAERDVPDYIEADHNKMVATFSRIPGLADVPFAVQMEPNLVVEFYSR.

Residues Glu-17–Ser-46 are disordered. The 64-residue stretch at Ser-94–Val-157 folds into the S4 RNA-binding domain.

It belongs to the universal ribosomal protein uS4 family. In terms of assembly, part of the 30S ribosomal subunit. Contacts protein S5. The interaction surface between S4 and S5 is involved in control of translational fidelity.

Its function is as follows. One of the primary rRNA binding proteins, it binds directly to 16S rRNA where it nucleates assembly of the body of the 30S subunit. Functionally, with S5 and S12 plays an important role in translational accuracy. The sequence is that of Small ribosomal subunit protein uS4 from Mesorhizobium japonicum (strain LMG 29417 / CECT 9101 / MAFF 303099) (Mesorhizobium loti (strain MAFF 303099)).